A 69-amino-acid chain; its full sequence is Sec-independent protein translocase protein TatA (69 aa).

Residues Met1 to Gly21 traverse the membrane as a helical segment. Positions Asn44 to Ala69 are disordered.

The protein belongs to the TatA/E family. As to quaternary structure, the Tat system comprises two distinct complexes: a TatABC complex, containing multiple copies of TatA, TatB and TatC subunits, and a separate TatA complex, containing only TatA subunits. Substrates initially bind to the TatABC complex, which probably triggers association of the separate TatA complex to form the active translocon.

Its subcellular location is the cell inner membrane. Part of the twin-arginine translocation (Tat) system that transports large folded proteins containing a characteristic twin-arginine motif in their signal peptide across membranes. TatA could form the protein-conducting channel of the Tat system. The sequence is that of Sec-independent protein translocase protein TatA from Magnetococcus marinus (strain ATCC BAA-1437 / JCM 17883 / MC-1).